A 358-amino-acid polypeptide reads, in one-letter code: Putative spore germination protein YfkT (358 aa).

10 helical membrane passes run 10–30, 36–56, 81–101, 107–127, 143–163, 179–199, 210–230, 262–282, 297–317, and 326–346; these read LFFG…ILMI, NAWH…WLMH, IIIL…IRFF, ILFL…FVAI, IFLF…ATQI, LQSG…PLLF, IFAI…SISV, IIAA…LYIV, AMYT…FLNT, and IKPI…YLII.

Belongs to the amino acid-polyamine-organocation (APC) superfamily. Spore germination protein (SGP) (TC 2.A.3.9) family.

Its subcellular location is the cell membrane. In terms of biological role, may be involved in spore germination. The chain is Putative spore germination protein YfkT (yfkT) from Bacillus subtilis (strain 168).